A 409-amino-acid polypeptide reads, in one-letter code: tRNA-specific 2-thiouridylase MnmA (409 aa).

ATP contacts are provided by residues 43-50 and Leu69; that span reads AMSGGVDS. Cys137 functions as the Nucleophile in the catalytic mechanism. Residues Cys137 and Cys235 are joined by a disulfide bond. Gly161 provides a ligand contact to ATP. An interaction with tRNA region spans residues 185 to 187; that stretch reads KDQ. Residue Cys235 is the Cysteine persulfide intermediate of the active site.

This sequence belongs to the MnmA/TRMU family.

It localises to the cytoplasm. The enzyme catalyses S-sulfanyl-L-cysteinyl-[protein] + uridine(34) in tRNA + AH2 + ATP = 2-thiouridine(34) in tRNA + L-cysteinyl-[protein] + A + AMP + diphosphate + H(+). Its function is as follows. Catalyzes the 2-thiolation of uridine at the wobble position (U34) of tRNA, leading to the formation of s(2)U34. This Caulobacter sp. (strain K31) protein is tRNA-specific 2-thiouridylase MnmA.